Reading from the N-terminus, the 94-residue chain is Large ribosomal subunit protein uL23 (94 aa).

The protein belongs to the universal ribosomal protein uL23 family. Part of the 50S ribosomal subunit. Contacts protein L29, and trigger factor when it is bound to the ribosome.

Functionally, one of the early assembly proteins it binds 23S rRNA. One of the proteins that surrounds the polypeptide exit tunnel on the outside of the ribosome. Forms the main docking site for trigger factor binding to the ribosome. The sequence is that of Large ribosomal subunit protein uL23 from Trichlorobacter lovleyi (strain ATCC BAA-1151 / DSM 17278 / SZ) (Geobacter lovleyi).